Reading from the N-terminus, the 316-residue chain is Acetyl-coenzyme A carboxylase carboxyl transferase subunit alpha (316 aa).

Residues 24–291 (NIKDKADIVD…KEALIQQLNE (268 aa)) enclose the CoA carboxyltransferase C-terminal domain.

This sequence belongs to the AccA family. As to quaternary structure, acetyl-CoA carboxylase is a heterohexamer composed of biotin carboxyl carrier protein (AccB), biotin carboxylase (AccC) and two subunits each of ACCase subunit alpha (AccA) and ACCase subunit beta (AccD).

It localises to the cytoplasm. The enzyme catalyses N(6)-carboxybiotinyl-L-lysyl-[protein] + acetyl-CoA = N(6)-biotinyl-L-lysyl-[protein] + malonyl-CoA. The protein operates within lipid metabolism; malonyl-CoA biosynthesis; malonyl-CoA from acetyl-CoA: step 1/1. In terms of biological role, component of the acetyl coenzyme A carboxylase (ACC) complex. First, biotin carboxylase catalyzes the carboxylation of biotin on its carrier protein (BCCP) and then the CO(2) group is transferred by the carboxyltransferase to acetyl-CoA to form malonyl-CoA. This Ruthia magnifica subsp. Calyptogena magnifica protein is Acetyl-coenzyme A carboxylase carboxyl transferase subunit alpha.